A 414-amino-acid polypeptide reads, in one-letter code: Gamma-glutamyl phosphate reductase (414 aa).

Belongs to the gamma-glutamyl phosphate reductase family.

It is found in the cytoplasm. It catalyses the reaction L-glutamate 5-semialdehyde + phosphate + NADP(+) = L-glutamyl 5-phosphate + NADPH + H(+). It participates in amino-acid biosynthesis; L-proline biosynthesis; L-glutamate 5-semialdehyde from L-glutamate: step 2/2. Its function is as follows. Catalyzes the NADPH-dependent reduction of L-glutamate 5-phosphate into L-glutamate 5-semialdehyde and phosphate. The product spontaneously undergoes cyclization to form 1-pyrroline-5-carboxylate. The chain is Gamma-glutamyl phosphate reductase from Alkaliphilus metalliredigens (strain QYMF).